Reading from the N-terminus, the 525-residue chain is Acyl-lipid (9-3)-desaturase (525 aa).

Residues 102–176 (KSTHPLSEVA…LQDFYIGDVE (75 aa)) enclose the Cytochrome b5 heme-binding domain. 2 residues coordinate heme: His137 and His159. The helical transmembrane segment at 216-236 (VAIFAASIAIICWSKTISAVL) threads the bilayer. Positions 254 to 258 (HDFLH) match the Histidine box-1 motif. A helical membrane pass occupies residues 266-286 (WLNEVVGYVIGNAVLGFSTGW). The Histidine box-2 motif lies at 291 to 295 (HNLHH). Helical transmembrane passes span 340 to 360 (QHLF…FWSW), 378 to 398 (GTVL…LPGW), and 401 to 421 (LVWM…VFVL). The Histidine box-3 signature appears at 462 to 466 (QIEHH).

The protein belongs to the fatty acid desaturase type 1 family.

The protein resides in the membrane. The enzyme catalyses (9Z,12Z,15Z)-octadecatrienoyl-containing glycerolipid + 2 Fe(II)-[cytochrome b5] + O2 + 2 H(+) = (6Z,9Z,12Z,15Z)-octadecatetraenoyl-containing glycerolipid + 2 Fe(III)-[cytochrome b5] + 2 H2O. The catalysed reaction is a (9Z,12Z)-octadecadienoyl-containing glycerolipid + 2 Fe(II)-[cytochrome b5] + O2 + 2 H(+) = (6Z,9Z,12Z)-octadecatrienoyl-containing glycerolipid + 2 Fe(III)-[cytochrome b5] + 2 H2O. It participates in lipid metabolism; polyunsaturated fatty acid biosynthesis. In terms of biological role, fatty acid desaturase able to introduce a delta(6)-double bond into delta(9)-unsaturated fatty-acid substrates. Can use both linoleic acid (18:2(9Z,12Z)) and alpha-linolenic acid (18:3(9Z,12Z,15Z)) as substrates. Required for the biosynthesis of arachidonic acid (20:4(5z,8Z,11Z,14Z)). The sequence is that of Acyl-lipid (9-3)-desaturase from Physcomitrium patens (Spreading-leaved earth moss).